A 291-amino-acid chain; its full sequence is uncharacterized protein (291 aa).

Belongs to the PhyH family.

This is an uncharacterized protein from Mycobacterium bovis (strain ATCC BAA-935 / AF2122/97).